Here is a 375-residue protein sequence, read N- to C-terminus: Ornithine transcarbamylase, chloroplastic (375 aa).

A chloroplast-targeting transit peptide spans 1–53; it reads MAAAMASHVSTARSPALSFSSSSSSFFPGTTLRRFSAVSLPSPALPRLRVSCQ. A54 is subject to N-acetylalanine. Carbamoyl phosphate contacts are provided by residues 123–126, R174, H201, and Q204; that span reads SMRT. Residues N232, D293, S297, and M298 each contribute to the L-ornithine site. The active-site Proton acceptor is C333. Carbamoyl phosphate is bound by residues 333 to 334 and R361; that span reads CL.

This sequence belongs to the aspartate/ornithine carbamoyltransferase superfamily. OTCase family.

The protein resides in the plastid. The protein localises to the chloroplast. The catalysed reaction is carbamoyl phosphate + L-ornithine = L-citrulline + phosphate + H(+). The sequence is that of Ornithine transcarbamylase, chloroplastic (OTC) from Arabidopsis thaliana (Mouse-ear cress).